Consider the following 251-residue polypeptide: Putative F-box protein L166 (251 aa).

The region spanning 1 to 46 (MDNICELFDEILPLIIEYLSDHDKVKFMTTCSRLYYFIDKVYYENI) is the F-box domain. The segment at 188–251 (PEPESQENFR…RPKSFMKYRR (64 aa)) is disordered. A compositionally biased stretch (polar residues) spans 202–217 (TESNNNKPVNKSQPQI). Residues 241-251 (KRPKSFMKYRR) show a composition bias toward basic residues.

This is Putative F-box protein L166 from Acanthamoeba polyphaga (Amoeba).